The primary structure comprises 161 residues: Beta-lactoglobulin-2 (161 aa).

2 cysteine pairs are disulfide-bonded: C66–C159 and C106–C119.

Belongs to the calycin superfamily. Lipocalin family. Monomer. As to expression, synthesized in mammary gland and secreted in milk.

Its subcellular location is the secreted. Functionally, primary component of whey, it binds retinol and is probably involved in the transport of that molecule. The sequence is that of Beta-lactoglobulin-2 (LGB2) from Canis lupus familiaris (Dog).